Here is a 551-residue protein sequence, read N- to C-terminus: Thermolysin (551 aa).

The first 31 residues, 1 to 31 (MKRKMKMKLVRFGLAAGLAAQVFFLPYNALA), serve as a signal peptide directing secretion. Residues 32 to 235 (STEHVTWNQQ…DAAKPGDVKS (204 aa)) constitute a propeptide, activation peptide. Residues Asp-292, Asp-294, Gln-296, and Asp-373 each contribute to the Ca(2+) site. Zn(2+) is bound at residue His-377. Residue Glu-378 is part of the active site. Residues His-381 and Glu-401 each coordinate Zn(2+). Residues Glu-412, Asn-418, Asp-420, Glu-422, Glu-425, Thr-429, Ile-432, and Asp-435 each coordinate Ca(2+). His-466 functions as the Proton donor in the catalytic mechanism.

This sequence belongs to the peptidase M4 family. The cofactor is Ca(2+). Zn(2+) serves as cofactor.

The protein resides in the secreted. It catalyses the reaction Preferential cleavage: Xaa-|-Leu &gt; Xaa-|-Phe.. Extracellular zinc metalloprotease. This is Thermolysin (nprS) from Geobacillus stearothermophilus (Bacillus stearothermophilus).